Reading from the N-terminus, the 126-residue chain is Protein ApaG (126 aa).

The ApaG domain occupies 2–126 (SDPRYQIDVS…FRLAVPGALH (125 aa)).

This is Protein ApaG from Azotobacter vinelandii (strain DJ / ATCC BAA-1303).